We begin with the raw amino-acid sequence, 612 residues long: Elongation factor 4 (612 aa).

A tr-type G domain is found at Lys11 to Thr193. GTP is bound by residues Asp23–Thr28 and Asn140–Asp143.

Belongs to the TRAFAC class translation factor GTPase superfamily. Classic translation factor GTPase family. LepA subfamily.

The protein localises to the cell membrane. The enzyme catalyses GTP + H2O = GDP + phosphate + H(+). Functionally, required for accurate and efficient protein synthesis under certain stress conditions. May act as a fidelity factor of the translation reaction, by catalyzing a one-codon backward translocation of tRNAs on improperly translocated ribosomes. Back-translocation proceeds from a post-translocation (POST) complex to a pre-translocation (PRE) complex, thus giving elongation factor G a second chance to translocate the tRNAs correctly. Binds to ribosomes in a GTP-dependent manner. The protein is Elongation factor 4 of Latilactobacillus sakei subsp. sakei (strain 23K) (Lactobacillus sakei subsp. sakei).